The primary structure comprises 253 residues: Major prion protein (253 aa).

Residues 1–22 form the signal peptide; the sequence is MANLGCWMLVLFVATWSDLGLC. The tract at residues 23 to 38 is interaction with ADGRG6; it reads KKRPKPGGWNTGGSRY. Positions 23 to 230 are interaction with GRB2, ERI3 and SYN1; it reads KKRPKPGGWN…ESQAYYQRGS (208 aa). Residues 26-108 are disordered; sequence PKPGGWNTGG…WNKPSKPKTN (83 aa). Repeat copies occupy residues 51–59, 60–67, 68–75, 76–83, and 84–91. The tract at residues 51–91 is 5 X 8 AA tandem repeats of P-H-G-G-G-W-G-Q; the sequence is PQGGGGWGQPHGGGWGQPHGGGWGQPHGGGWGQPHGGGWGQ. Positions 52-95 are enriched in gly residues; sequence QGGGGWGQPHGGGWGQPHGGGWGQPHGGGWGQPHGGGWGQGGGT. Residues H61, G62, G63, H69, G70, G71, H77, G78, G79, H85, G86, and G87 each contribute to the Cu(2+) site. C179 and C214 form a disulfide bridge. N-linked (GlcNAc...) asparagine glycosylation is found at N181 and N197. S230 carries GPI-anchor amidated serine lipidation. A propeptide spans 231 to 253 (removed in mature form); sequence SMVLFSSPPVILLISFLIFLIVG.

The protein belongs to the prion family. As to quaternary structure, monomer and homodimer. Has a tendency to aggregate into amyloid fibrils containing a cross-beta spine, formed by a steric zipper of superposed beta-strands. Soluble oligomers may represent an intermediate stage on the path to fibril formation. Copper binding may promote oligomerization. Interacts with GRB2, APP, ERI3/PRNPIP and SYN1. Mislocalized cytosolically exposed PrP interacts with MGRN1; this interaction alters MGRN1 subcellular location and causes lysosomal enlargement. Interacts with APP. Interacts with KIAA1191. Interacts with ADGRG6.

Its subcellular location is the cell membrane. It is found in the golgi apparatus. Functionally, its primary physiological function is unclear. May play a role in neuronal development and synaptic plasticity. May be required for neuronal myelin sheath maintenance. May promote myelin homeostasis through acting as an agonist for ADGRG6 receptor. May play a role in iron uptake and iron homeostasis. Soluble oligomers are toxic to cultured neuroblastoma cells and induce apoptosis (in vitro). Association with GPC1 (via its heparan sulfate chains) targets PRNP to lipid rafts. Also provides Cu(2+) or Zn(2+) for the ascorbate-mediated GPC1 deaminase degradation of its heparan sulfate side chains. The sequence is that of Major prion protein (PRNP) from Gorilla gorilla gorilla (Western lowland gorilla).